A 587-amino-acid polypeptide reads, in one-letter code: Sedolisin (587 aa).

The first 32 residues, 1 to 32, serve as a signal peptide directing secretion; the sequence is MKSSAAKQTVLCLNRYAVVALPLAIASFAAFG. Positions 33–215 are cleaved as a propeptide — removed in mature form; sequence ASPASTLWAP…VGERSAAKTL (183 aa). Residues 219–583 enclose the Peptidase S53 domain; that stretch reads TAKGHNPTEF…AKLSAYIRSN (365 aa). A disordered region spans residues 276–295; the sequence is TIQTGSSNGDYSDDQQGQGE. Residues glutamate 295 and aspartate 299 each act as charge relay system in the active site. The cysteines at positions 352 and 391 are disulfide-linked. Serine 502 (charge relay system) is an active-site residue. The Ca(2+) site is built by aspartate 543, valine 544, glycine 559, glycine 561, and aspartate 563. Residues 586–587 constitute a propeptide, removed in mature form; the sequence is GH.

The cofactor is Ca(2+). Autocatalytically processed.

It is found in the periplasm. It carries out the reaction Hydrolysis of the B chain of insulin at 13-Glu-|-Ala-14, 15-Leu-|-Tyr-16 and 25-Phe-|-Tyr-26 and angiotensin I at 4-Tyr-|-Ile-5. A good synthetic substrate is Lys-Pro-Ile-Glu-Phe-|-Phe(NO2)-Arg-Leu.. With respect to regulation, inhibited by 1,2-epoxy-3-(p-nitrophenoxy)propane (EPNP), but not by carboxyl proteinase inhibitors, such as pepstatin, pepstatin Ac (S-PI) and diazoacetyl-DL-norleucine methyl ester (DAN). Inhibited by tyrostatin, pseudo-tyrostatin, AcIPF, AcIAF, chymostatin and pseudo-iodotyrostatin. In terms of biological role, pepstatin-insensitive serine-carboxyl proteinase. In vitro can hydrolyze various synthetic peptides. Also shows activity on acid-denatured hemoglobin and on casein. In Pseudomonas sp. (strain 101) (Achromobacter parvulus T1), this protein is Sedolisin (pcp).